Here is a 66-residue protein sequence, read N- to C-terminus: Beta-toxin Cbo1 (66 aa).

The LCN-type CS-alpha/beta domain maps to K1–N66. Cystine bridges form between C12–C65, C16–C41, C25–C46, and C29–C48. The residue at position 66 (N66) is an Asparagine amide.

The protein belongs to the long (4 C-C) scorpion toxin superfamily. Sodium channel inhibitor family. Beta subfamily. In terms of tissue distribution, expressed by the venom gland.

Its subcellular location is the secreted. Its function is as follows. Beta toxins bind voltage-independently at site-4 of sodium channels and shift the voltage of activation toward more negative potentials thereby affecting sodium channel activation and promoting spontaneous and repetitive firing. Is active on the human voltage-gated sodium channel Nav1.6/SCN8A when tested at 200 nM. In vivo, is toxic to mice when intraperitoneally injected. The chain is Beta-toxin Cbo1 from Centruroides bonito (Scorpion).